Here is a 96-residue protein sequence, read N- to C-terminus: CRISPR-associated endoribonuclease Cas2 1 (96 aa).

D8 provides a ligand contact to Mg(2+).

This sequence belongs to the CRISPR-associated endoribonuclease Cas2 protein family. Homodimer, forms a heterotetramer with a Cas1 homodimer. Mg(2+) is required as a cofactor.

In terms of biological role, CRISPR (clustered regularly interspaced short palindromic repeat), is an adaptive immune system that provides protection against mobile genetic elements (viruses, transposable elements and conjugative plasmids). CRISPR clusters contain sequences complementary to antecedent mobile elements and target invading nucleic acids. CRISPR clusters are transcribed and processed into CRISPR RNA (crRNA). Functions as a ssRNA-specific endoribonuclease. Involved in the integration of spacer DNA into the CRISPR cassette. The sequence is that of CRISPR-associated endoribonuclease Cas2 1 from Moorella thermoacetica (strain ATCC 39073 / JCM 9320).